Reading from the N-terminus, the 105-residue chain is Host transcription reprogramming factor 7 (105 aa).

The signal sequence occupies residues 1–19; it reads MKTKTIFQLVALFAIGATA. The segment at 69 to 95 adopts a C2H2-type zinc-finger fold; sequence YWCRIGNCNAAFKSLAARCRHEKTAVH.

Its subcellular location is the secreted. The protein localises to the host nucleus. In terms of biological role, probable secreted effector that translocates into the nuclei of host cells to reprogram the expression of targeted genes by binding on effector binding elements in rice. In Pyricularia oryzae (strain 70-15 / ATCC MYA-4617 / FGSC 8958) (Rice blast fungus), this protein is Host transcription reprogramming factor 7.